A 399-amino-acid chain; its full sequence is MERKNSSRESPRRLSAKVGKGTEMKKVARQLGMAAAESDKDSGFSDGSSECLSSAEQMESEDMLSALGWSREDRPRQNSKTAKNAFPTLSPMVVMKNVLVKQGSSSSQLQSWTVQPSFEVISAQPQLLFLHPPVPSPVSPCHTGEKKSDSRNYLPILNSYTKIAPHPGKRGLSVGPEEKGTSGVQKKICTERLGPSLSSNEPTKAGAVPSSPSTPAPPSAKLAEDSALQGVPSLVAGGSPQTLQPVSSSHVAKAPSLTFASPASPVCASDSTLHGLESNSPLSPLSANYSSPLWAAEHLCRSPDIFSEQRQSKHRRFQNTLVVLHKSGLLEITLKTKELIRQNQATQVELDQLKEQTQLFIEATKSRAPQAWAKLQASLTPGSSNTGSDLEAFSDHPDI.

Basic and acidic residues predominate over residues Met-1–Arg-12. 2 disordered regions span residues Met-1–Ala-85 and Ser-159–Glu-224. Ser-213 bears the Phosphoserine mark. Residues Thr-333 to Leu-359 are a coiled coil. The segment covering Ser-378–Ser-388 has biased composition (polar residues). The disordered stretch occupies residues Ser-378–Ile-399.

Interacts with CLOCK. Forms a ternary complex with the CLOCK-BMAL1 heterodimer. Interacts with CAD and HSPA5.

Its subcellular location is the nucleus. The protein localises to the cytoplasm. It is found in the cytosol. In terms of biological role, transcriptional repressor which may act as a negative-feedback regulator of CLOCK-BMAL1 transcriptional activity in the circadian-clock mechanism. May stimulate BMAL1-dependent phosphorylation of CLOCK. However, the physiological relevance of these observations is unsure, since experiments in knockout mice showed that CIPC is not critially required for basic circadian clock. This chain is CLOCK-interacting pacemaker (CIPC), found in Pongo abelii (Sumatran orangutan).